The primary structure comprises 217 residues: Small ribosomal subunit protein uS3 (217 aa).

Residues 38–106 enclose the KH type-2 domain; sequence IRKFIDNELK…KVHINVIEIK (69 aa).

It belongs to the universal ribosomal protein uS3 family. As to quaternary structure, part of the 30S ribosomal subunit. Forms a tight complex with proteins S10 and S14.

Functionally, binds the lower part of the 30S subunit head. Binds mRNA in the 70S ribosome, positioning it for translation. This chain is Small ribosomal subunit protein uS3 (rpsC), found in Staphylococcus aureus (strain COL).